A 28-amino-acid polypeptide reads, in one-letter code: uncharacterized protein (28 aa).

It localises to the cell inner membrane. This is an uncharacterized protein from Escherichia coli (strain K12).